The following is a 181-amino-acid chain: Large ribosomal subunit protein uL10 (181 aa).

It belongs to the universal ribosomal protein uL10 family. Part of the ribosomal stalk of the 50S ribosomal subunit. The N-terminus interacts with L11 and the large rRNA to form the base of the stalk. The C-terminus forms an elongated spine to which L12 dimers bind in a sequential fashion forming a multimeric L10(L12)X complex.

Its function is as follows. Forms part of the ribosomal stalk, playing a central role in the interaction of the ribosome with GTP-bound translation factors. This is Large ribosomal subunit protein uL10 from Fervidobacterium nodosum (strain ATCC 35602 / DSM 5306 / Rt17-B1).